A 206-amino-acid polypeptide reads, in one-letter code: Peroxynitrite isomerase (206 aa).

The short motif at 21-27 (GTWEGNG) is the GXWXGXG element. H190 contributes to the heme b binding site.

It belongs to the nitrobindin family. Homodimer. The cofactor is heme b.

The catalysed reaction is peroxynitrite = nitrate. It participates in nitrogen metabolism. Functionally, heme-binding protein able to scavenge peroxynitrite and to protect free L-tyrosine against peroxynitrite-mediated nitration, by acting as a peroxynitrite isomerase that converts peroxynitrite to nitrate. Therefore, this protein likely plays a role in peroxynitrite sensing and in the detoxification of reactive nitrogen and oxygen species (RNS and ROS, respectively). Is able to bind nitric oxide (NO) in vitro, but may act as a sensor of peroxynitrite levels in vivo. This Kocuria rhizophila (strain ATCC 9341 / DSM 348 / NBRC 103217 / DC2201) protein is Peroxynitrite isomerase.